Consider the following 80-residue polypeptide: Large ribosomal subunit protein uL30 (80 aa).

Belongs to the universal ribosomal protein uL30 family. As to quaternary structure, part of the 50S ribosomal subunit.

This is Large ribosomal subunit protein uL30 from Vesicomyosocius okutanii subsp. Calyptogena okutanii (strain HA).